The sequence spans 228 residues: Cytochrome c oxidase subunit 2 (228 aa).

Residues 1 to 14 (MANHSQLGFQDASS) lie on the Mitochondrial intermembrane side of the membrane. Residues 15–45 (PIMEELVEFHDHALIVALAICSLVLYLLAHM) form a helical membrane-spanning segment. Topologically, residues 46–58 (LMEKLSSNAVDAQ) are mitochondrial matrix. The helical transmembrane segment at 59–86 (EVELIWTILPAIVLVLLALPSLQILYMM) threads the bilayer. Residues 87 to 228 (DEIDEPDLTL…EAWSSLLSSS (142 aa)) lie on the Mitochondrial intermembrane side of the membrane. Positions 160, 195, 197, 199, 203, and 206 each coordinate Cu cation. Glu-197 is a Mg(2+) binding site.

It belongs to the cytochrome c oxidase subunit 2 family. Component of the cytochrome c oxidase (complex IV, CIV), a multisubunit enzyme composed of 14 subunits. The complex is composed of a catalytic core of 3 subunits MT-CO1, MT-CO2 and MT-CO3, encoded in the mitochondrial DNA, and 11 supernumerary subunits COX4I, COX5A, COX5B, COX6A, COX6B, COX6C, COX7A, COX7B, COX7C, COX8 and NDUFA4, which are encoded in the nuclear genome. The complex exists as a monomer or a dimer and forms supercomplexes (SCs) in the inner mitochondrial membrane with NADH-ubiquinone oxidoreductase (complex I, CI) and ubiquinol-cytochrome c oxidoreductase (cytochrome b-c1 complex, complex III, CIII), resulting in different assemblies (supercomplex SCI(1)III(2)IV(1) and megacomplex MCI(2)III(2)IV(2)). Found in a complex with TMEM177, COA6, COX18, COX20, SCO1 and SCO2. Interacts with TMEM177 in a COX20-dependent manner. Interacts with COX20. Interacts with COX16. Cu cation is required as a cofactor.

It localises to the mitochondrion inner membrane. The enzyme catalyses 4 Fe(II)-[cytochrome c] + O2 + 8 H(+)(in) = 4 Fe(III)-[cytochrome c] + 2 H2O + 4 H(+)(out). In terms of biological role, component of the cytochrome c oxidase, the last enzyme in the mitochondrial electron transport chain which drives oxidative phosphorylation. The respiratory chain contains 3 multisubunit complexes succinate dehydrogenase (complex II, CII), ubiquinol-cytochrome c oxidoreductase (cytochrome b-c1 complex, complex III, CIII) and cytochrome c oxidase (complex IV, CIV), that cooperate to transfer electrons derived from NADH and succinate to molecular oxygen, creating an electrochemical gradient over the inner membrane that drives transmembrane transport and the ATP synthase. Cytochrome c oxidase is the component of the respiratory chain that catalyzes the reduction of oxygen to water. Electrons originating from reduced cytochrome c in the intermembrane space (IMS) are transferred via the dinuclear copper A center (CU(A)) of subunit 2 and heme A of subunit 1 to the active site in subunit 1, a binuclear center (BNC) formed by heme A3 and copper B (CU(B)). The BNC reduces molecular oxygen to 2 water molecules using 4 electrons from cytochrome c in the IMS and 4 protons from the mitochondrial matrix. The chain is Cytochrome c oxidase subunit 2 (MT-CO2) from Anas platyrhynchos (Mallard).